The following is a 796-amino-acid chain: Choline transporter-like 2 (796 aa).

An N-linked (GlcNAc...) asparagine glycan is attached at Asn20. Residues 35–55 (PCLLLFVLFLGGWAFIAQYAI) form a helical membrane-spanning segment. N-linked (GlcNAc...) asparagine glycosylation is found at Asn209 and Asn284. Helical transmembrane passes span 304–324 (WSIV…YIAL), 332–352 (ILWF…YFSV), 386–406 (LYLS…VIVL), and 431–451 (VFFP…AIGV). N-linked (GlcNAc...) asparagine glycosylation is found at Asn488 and Asn520. A run of 5 helical transmembrane segments spans residues 542-562 (VFGF…VLAS), 585-605 (FFQT…ILAI), 626-648 (AVTR…FLKF), 691-711 (FLFF…TYYF), and 724-744 (IAVP…VFFG).

This sequence belongs to the CTL (choline transporter-like) family.

It localises to the membrane. This chain is Choline transporter-like 2, found in Drosophila melanogaster (Fruit fly).